Here is a 137-residue protein sequence, read N- to C-terminus: Putative pre-16S rRNA nuclease (137 aa).

Belongs to the YqgF nuclease family.

Its subcellular location is the cytoplasm. Functionally, could be a nuclease involved in processing of the 5'-end of pre-16S rRNA. The chain is Putative pre-16S rRNA nuclease from Chromobacterium violaceum (strain ATCC 12472 / DSM 30191 / JCM 1249 / CCUG 213 / NBRC 12614 / NCIMB 9131 / NCTC 9757 / MK).